Here is a 102-residue protein sequence, read N- to C-terminus: Small ribosomal subunit protein uS10 (102 aa).

Belongs to the universal ribosomal protein uS10 family. In terms of assembly, part of the 30S ribosomal subunit.

In terms of biological role, involved in the binding of tRNA to the ribosomes. In Arthrobacter sp. (strain FB24), this protein is Small ribosomal subunit protein uS10.